The primary structure comprises 330 residues: uncharacterized protein (330 aa).

H257 is an active-site residue.

Belongs to the IUNH family.

This is an uncharacterized protein from Schizosaccharomyces pombe (strain 972 / ATCC 24843) (Fission yeast).